The sequence spans 129 residues: Nif-specific regulatory protein (129 aa).

The region spanning glutamate 1–isoleucine 46 is the Sigma-54 factor interaction domain. Positions glutamine 101–isoleucine 129 form a DNA-binding region, H-T-H motif.

Interacts with sigma-54.

Its function is as follows. Required for activation of most nif operons, which are directly involved in nitrogen fixation. This Azotobacter chroococcum mcd 1 protein is Nif-specific regulatory protein (nifA).